The primary structure comprises 340 residues: Serine racemase (340 aa).

Glutamate 13 contacts Mg(2+). ATP is bound by residues serine 31, serine 32, isoleucine 33, lysine 51, and threonine 52. The active-site Proton acceptor is the lysine 56. Lysine 56 bears the N6-(pyridoxal phosphate)lysine mark. Positions 69 and 81 each coordinate Ca(2+). The active-site Proton acceptor is the serine 84. Asparagine 86 contributes to the pyridoxal 5'-phosphate binding site. An ATP-binding site is contributed by glutamine 89. Residue cysteine 113 is modified to S-nitrosocysteine. Tyrosine 121 serves as a coordination point for ATP. Residue asparagine 154 participates in pyridoxal 5'-phosphate binding. Aspartate 178 lines the Mg(2+) pocket. 5 residues coordinate pyridoxal 5'-phosphate: glycine 185, glycine 186, glycine 187, glycine 188, and methionine 189. The Mg(2+) site is built by glutamate 210, alanine 214, aspartate 216, and asparagine 247. Ca(2+)-binding residues include glutamate 210, alanine 214, aspartate 216, and asparagine 247. The Mn(2+) site is built by glutamate 210, alanine 214, and aspartate 216. Residue lysine 279 coordinates ATP. A pyridoxal 5'-phosphate-binding site is contributed by serine 313. Asparagine 316 serves as a coordination point for ATP.

The protein belongs to the serine/threonine dehydratase family. Homodimer. Mg(2+) serves as cofactor. It depends on Mn(2+) as a cofactor. Requires Ca(2+) as cofactor. The cofactor is pyridoxal 5'-phosphate. Post-translationally, S-nitrosylated, leading to decrease the enzyme activity. In terms of tissue distribution, expressed in the cerebellum, hippocampus, dorsolateral prefrontal cortex, and in motor neurons and glial cells of the lumbar spinal cord (at protein level). Increased in the dorsolateral prefrontal cortex of schizophrenic patients (at protein level). Brain: expressed at high levels in hippocampus and corpus callosum, intermediate levels in substantia nigra and caudate, and low levels in amygdala, thalamus, and subthalamic nuclei. Expressed in heart, skeletal muscle, kidney, and liver.

The enzyme catalyses L-serine = D-serine. It catalyses the reaction D-serine = pyruvate + NH4(+). The catalysed reaction is L-serine = pyruvate + NH4(+). Its activity is regulated as follows. Allosterically activated by magnesium, and possibly also other divalent metal cations. Allosterically activated by ATP, ADP or GTP. Competitively inhibited by malonate. Inhibited by meso-tartrate and malonate. Catalyzes the synthesis of D-serine from L-serine. D-serine is a key coagonist with glutamate at NMDA receptors. Has dehydratase activity towards both L-serine and D-serine. The polypeptide is Serine racemase (SRR) (Homo sapiens (Human)).